A 374-amino-acid polypeptide reads, in one-letter code: Histidinol-phosphate aminotransferase 2 (374 aa).

Lys227 carries the post-translational modification N6-(pyridoxal phosphate)lysine.

This sequence belongs to the class-II pyridoxal-phosphate-dependent aminotransferase family. Histidinol-phosphate aminotransferase subfamily. As to quaternary structure, homodimer. Pyridoxal 5'-phosphate is required as a cofactor.

It catalyses the reaction L-histidinol phosphate + 2-oxoglutarate = 3-(imidazol-4-yl)-2-oxopropyl phosphate + L-glutamate. It participates in amino-acid biosynthesis; L-histidine biosynthesis; L-histidine from 5-phospho-alpha-D-ribose 1-diphosphate: step 7/9. In Ralstonia nicotianae (strain ATCC BAA-1114 / GMI1000) (Ralstonia solanacearum), this protein is Histidinol-phosphate aminotransferase 2 (hisC2).